Consider the following 98-residue polypeptide: Co-chaperonin GroES (98 aa).

This sequence belongs to the GroES chaperonin family. Heptamer of 7 subunits arranged in a ring. Interacts with the chaperonin GroEL.

It is found in the cytoplasm. Its function is as follows. Together with the chaperonin GroEL, plays an essential role in assisting protein folding. The GroEL-GroES system forms a nano-cage that allows encapsulation of the non-native substrate proteins and provides a physical environment optimized to promote and accelerate protein folding. GroES binds to the apical surface of the GroEL ring, thereby capping the opening of the GroEL channel. This is Co-chaperonin GroES from Clavibacter michiganensis subsp. michiganensis (strain NCPPB 382).